The chain runs to 165 residues: Protein-export protein SecB (165 aa).

This sequence belongs to the SecB family. In terms of assembly, homotetramer, a dimer of dimers. One homotetramer interacts with 1 SecA dimer.

The protein localises to the cytoplasm. Functionally, one of the proteins required for the normal export of preproteins out of the cell cytoplasm. It is a molecular chaperone that binds to a subset of precursor proteins, maintaining them in a translocation-competent state. It also specifically binds to its receptor SecA. The polypeptide is Protein-export protein SecB (Ruegeria pomeroyi (strain ATCC 700808 / DSM 15171 / DSS-3) (Silicibacter pomeroyi)).